The following is a 442-amino-acid chain: Amino-acid acetyltransferase (442 aa).

The N-acetyltransferase domain occupies 295–442 (EQARAATIED…RSKVLSKTIS (148 aa)).

Belongs to the acetyltransferase family. ArgA subfamily.

Its subcellular location is the cytoplasm. The catalysed reaction is L-glutamate + acetyl-CoA = N-acetyl-L-glutamate + CoA + H(+). Its pathway is amino-acid biosynthesis; L-arginine biosynthesis; N(2)-acetyl-L-ornithine from L-glutamate: step 1/4. The protein is Amino-acid acetyltransferase of Aeromonas salmonicida (strain A449).